Here is a 348-residue protein sequence, read N- to C-terminus: MIRISLDLMGGDFGPQVVIPGAAKALDRHPDISFVFYGLKEQCDPVLAKFPKLKEKSVFHDCELAVSMSEKPSQALRRGRYISTMWRSIEAVKTGEADVAVSAGNTGALMAMAKFCLRTMANIERPAIAAIWPTLKGESIVLDVGATIGADAQQLMDFALMGGAMARALFEVERPTVGLLNVGVEEMKGQEEVKEAGRLLREANIDSLEYSGFVEGNDLGKGTVDVVVTEGFSGNIALKTAEGTAKQIGEYLRAAMSRTLLARIGYLFAKSAFDMLREKLDPSKVNGGVFLGLNGIVIKSHGGANAEGIAAAIEVGYDMAKNGLNQKIENDLKKYHAKRLPPMGPEAA.

Belongs to the PlsX family. In terms of assembly, homodimer. Probably interacts with PlsY.

The protein localises to the cytoplasm. The catalysed reaction is a fatty acyl-[ACP] + phosphate = an acyl phosphate + holo-[ACP]. It functions in the pathway lipid metabolism; phospholipid metabolism. Functionally, catalyzes the reversible formation of acyl-phosphate (acyl-PO(4)) from acyl-[acyl-carrier-protein] (acyl-ACP). This enzyme utilizes acyl-ACP as fatty acyl donor, but not acyl-CoA. This Rhizobium leguminosarum bv. trifolii (strain WSM2304) protein is Phosphate acyltransferase.